Reading from the N-terminus, the 239-residue chain is Claudin-14 (239 aa).

At 1 to 7 (MASTAVQ) the chain is on the cytoplasmic side. Residues 8–28 (LLGFLLSFLGMVGTLITTILP) traverse the membrane as a helical segment. The Extracellular segment spans residues 29–81 (HWRRTAHVGTNILTAVSYLKGLWMECVWHSTGIYQCQIYRSLLALPRDLQAAR). Residues 82–102 (ALMVISCLLSGMACACAVVGM) form a helical membrane-spanning segment. The Cytoplasmic portion of the chain corresponds to 103–115 (KCTRCAKGTPAKT). A helical transmembrane segment spans residues 116 to 136 (TFAVLGGALFLLAGLLCMVAV). At 137 to 162 (SWTTNDVVQNFYNPLLPSGMKFEIGQ) the chain is on the extracellular side. The helical transmembrane segment at 163 to 183 (ALYLGFISSSLSLIGGTLLCL) threads the bilayer. Topologically, residues 184–239 (SCQDEAPYRPYPPQSRAGATTTATAPAYRPPAAYKDNRAPSVTSAAHSGYRLNDYV) are cytoplasmic.

The protein belongs to the claudin family. Expressed in all sensory epithelia of the inner ear vestibular organs, as well as in liver and kidney.

The protein localises to the cell junction. Its subcellular location is the tight junction. It is found in the cell membrane. Plays a major role in tight junction-specific obliteration of the intercellular space, through calcium-independent cell-adhesion activity. This chain is Claudin-14 (Cldn14), found in Mus musculus (Mouse).